Here is a 136-residue protein sequence, read N- to C-terminus: Large ribosomal subunit protein uL16 (136 aa).

The protein belongs to the universal ribosomal protein uL16 family. As to quaternary structure, part of the 50S ribosomal subunit.

Its function is as follows. Binds 23S rRNA and is also seen to make contacts with the A and possibly P site tRNAs. The chain is Large ribosomal subunit protein uL16 from Hamiltonella defensa subsp. Acyrthosiphon pisum (strain 5AT).